A 310-amino-acid chain; its full sequence is Probable manganese-dependent inorganic pyrophosphatase (310 aa).

Positions 10, 14, 16, 75, 97, and 149 each coordinate Mn(2+).

This sequence belongs to the PPase class C family. Mn(2+) serves as cofactor.

The protein resides in the cytoplasm. It carries out the reaction diphosphate + H2O = 2 phosphate + H(+). In Clostridium acetobutylicum (strain ATCC 824 / DSM 792 / JCM 1419 / IAM 19013 / LMG 5710 / NBRC 13948 / NRRL B-527 / VKM B-1787 / 2291 / W), this protein is Probable manganese-dependent inorganic pyrophosphatase.